Here is a 310-residue protein sequence, read N- to C-terminus: 4-hydroxythreonine-4-phosphate dehydrogenase (310 aa).

Substrate-binding residues include histidine 126 and threonine 127. Residues histidine 156, histidine 195, and histidine 251 each contribute to the a divalent metal cation site. Positions 259, 268, and 277 each coordinate substrate.

It belongs to the PdxA family. As to quaternary structure, homodimer. The cofactor is Zn(2+). Mg(2+) is required as a cofactor. Co(2+) serves as cofactor.

Its subcellular location is the cytoplasm. It catalyses the reaction 4-(phosphooxy)-L-threonine + NAD(+) = 3-amino-2-oxopropyl phosphate + CO2 + NADH. The protein operates within cofactor biosynthesis; pyridoxine 5'-phosphate biosynthesis; pyridoxine 5'-phosphate from D-erythrose 4-phosphate: step 4/5. Functionally, catalyzes the NAD(P)-dependent oxidation of 4-(phosphooxy)-L-threonine (HTP) into 2-amino-3-oxo-4-(phosphooxy)butyric acid which spontaneously decarboxylates to form 3-amino-2-oxopropyl phosphate (AHAP). In Helicobacter acinonychis (strain Sheeba), this protein is 4-hydroxythreonine-4-phosphate dehydrogenase.